The following is a 318-amino-acid chain: NADH-ubiquinone oxidoreductase chain 1 (318 aa).

8 consecutive transmembrane segments (helical) span residues 2 to 22 (FMINVLSLIIPILLAVAFLTL), 69 to 89 (LMFIMAPILALTLALTMWIPL), 100 to 120 (LGVLFMLAMSSLAVYSILWSG), 146 to 166 (LAIILLSVLLMNGSFTLAMLI), 171 to 191 (YMWLIIPAWPLAMMWFISTLA), 223 to 243 (FFLAEYANIIMMNILTTILFF), 253 to 273 (ELYTINFTVKTLLLTTTFLWI), and 294 to 314 (LPLTLALCMWHVSLPIITASI).

This sequence belongs to the complex I subunit 1 family. Core subunit of respiratory chain NADH dehydrogenase (Complex I) which is composed of 45 different subunits.

It localises to the mitochondrion inner membrane. The enzyme catalyses a ubiquinone + NADH + 5 H(+)(in) = a ubiquinol + NAD(+) + 4 H(+)(out). Functionally, core subunit of the mitochondrial membrane respiratory chain NADH dehydrogenase (Complex I) which catalyzes electron transfer from NADH through the respiratory chain, using ubiquinone as an electron acceptor. Essential for the catalytic activity and assembly of complex I. This chain is NADH-ubiquinone oxidoreductase chain 1 (MT-ND1), found in Felis catus (Cat).